The following is a 199-amino-acid chain: Pyridoxal 5'-phosphate synthase subunit PdxT (199 aa).

49–51 is a binding site for L-glutamine; sequence GES. Catalysis depends on Cys81, which acts as the Nucleophile. L-glutamine is bound by residues Arg110 and 139–140; that span reads IR. Catalysis depends on charge relay system residues His175 and Glu177.

The protein belongs to the glutaminase PdxT/SNO family. As to quaternary structure, in the presence of PdxS, forms a dodecamer of heterodimers. Only shows activity in the heterodimer.

The catalysed reaction is aldehydo-D-ribose 5-phosphate + D-glyceraldehyde 3-phosphate + L-glutamine = pyridoxal 5'-phosphate + L-glutamate + phosphate + 3 H2O + H(+). It catalyses the reaction L-glutamine + H2O = L-glutamate + NH4(+). It participates in cofactor biosynthesis; pyridoxal 5'-phosphate biosynthesis. Functionally, catalyzes the hydrolysis of glutamine to glutamate and ammonia as part of the biosynthesis of pyridoxal 5'-phosphate. The resulting ammonia molecule is channeled to the active site of PdxS. This chain is Pyridoxal 5'-phosphate synthase subunit PdxT, found in Frankia alni (strain DSM 45986 / CECT 9034 / ACN14a).